A 56-amino-acid chain; its full sequence is Large ribosomal subunit protein bL32 (56 aa).

The segment covering 1–19 has biased composition (basic residues); sequence MAVPKRKKSRSTTRHRRAQ. Residues 1–22 form a disordered region; sequence MAVPKRKKSRSTTRHRRAQWKT.

The protein belongs to the bacterial ribosomal protein bL32 family.

This is Large ribosomal subunit protein bL32 from Cutibacterium acnes (strain DSM 16379 / KPA171202) (Propionibacterium acnes).